Reading from the N-terminus, the 245-residue chain is Lytic switch protein BZLF1 (245 aa).

A transactivation region spans residues 1 to 167 (MMDPNSTSED…RTRKPQQPES (167 aa)). Residues Thr14 and Thr159 each carry the phosphothreonine; by host modification. The short motif at 157 to 194 (RRTRKPQQPESLEECDSELEIKRYKNRVASRKCRAKFK) is the Bipartite nuclear localization signal element. Residues Ser167, Ser173, and Ser186 each carry the phosphoserine; by host modification. A bZIP domain is found at 170-228 (ECDSELEIKRYKNRVASRKCRAKFKQLLQHYREVAAAKSSENDRLRLLLKQMCPSLDVD). Positions 178–195 (KRYKNRVASRKCRAKFKQ) are basic motif. Positions 196 to 228 (LLQHYREVAAAKSSENDRLRLLLKQMCPSLDVD) are leucine-zipper. Positions 229–245 (SIIPRTPDVLHEDLLNF) are accessory activation domain.

It belongs to the bZIP family. Homodimer. Interacts (via b-ZIP domain) with the DNA polymerase processivity factor BMRF1 (via N-terminus); this interaction may inhibit BZLF1-induced transcription of the BMRF1 promoter. Interacts with human UBN1, CRTC2 and RACK1. Interacts (via N-terminus) with human PAX5 (via N-terminus); this interaction inhibits BZLF1-mediated lytic viral reactivation. Interacts (via leucine-zipper domain) with host CEBPA; this interaction induces G1 host cell cycle arrest. Interacts (via C-terminus) with host TP53BP1 (via C-terminus); this interaction is involved in the activation of the viral lytic cycle. Interacts with host chromatin-remodeling ATPase INO80; this interaction participates to the activation of early lytic viral genes by BZLF1. Interacts with host regulator of chromatin SMARCA5/hSNF2H; this interaction participates to the activation of early lytic viral genes by BZLF1. Interacts with host PLSCR1/Phospholipid scramblase 1; this interaction negatively regulates the transcriptional regulatory activity of BZLF1 by preventing the formation of the BZLF1-CBP complex.

The protein localises to the host nucleus. Its function is as follows. Transcription factor that acts as a molecular switch to induce the transition from the latent to the lytic or productive phase of the virus cycle. Mediates the switch from the latent to the lytic cycle of infection in cells containing a highly methylated viral genome. Probably binds to silenced chromatin and recruits host chromatin-remodeling enzymes. Regulates this switch by binding to 2 types of ZEBRA response elements (ZREs): the CpG-free AP-1 like elements (latency) and the methylated CpG-containing elements (lytic replication). Activates preferentially the methylated forms of the viral lytic R (BRLF1) and Na (BRRF1) gene promoters, the latters being the first genes activated during Z-mediated reactivation in latently infected cells. BZLF1 and BRLF1 act together to trigger lytic replication. Also binds the lytic origin of replication, oriLyt. Induces G1 cell cycle arrest by stabilizing the host CCAAT/enhancer binding protein CEBPA. This function is important because the lytic cycle preferentially takes place in host cells arrested in G1. The chain is Lytic switch protein BZLF1 from Epstein-Barr virus (strain B95-8) (HHV-4).